The following is a 268-amino-acid chain: Trypsin-like protease (268 aa).

The signal sequence occupies residues 1 to 41 (MTHTTTIAAKRGGLALAKKAAAAGAVALAVASLQPVSAAHA). A propeptide spans 42 to 45 (ADAR) (activation peptide). The 221-residue stretch at 46–266 (VIGGKPAAQN…FAKDIAKAAS (221 aa)) folds into the Peptidase S1 domain. C67 and C83 are disulfide-bonded. Residues H82 and D127 each act as charge relay system in the active site. 2 disulfides stabilise this stretch: C187-C202 and C213-C242. Catalysis depends on S217, which acts as the Charge relay system.

It belongs to the peptidase S1 family.

Protease that shows preferential cleavage after Arg and Lys residues. The sequence is that of Trypsin-like protease from Streptomyces glaucescens.